Reading from the N-terminus, the 185-residue chain is Ribosome-recycling factor (185 aa).

This sequence belongs to the RRF family.

It localises to the cytoplasm. In terms of biological role, responsible for the release of ribosomes from messenger RNA at the termination of protein biosynthesis. May increase the efficiency of translation by recycling ribosomes from one round of translation to another. This Campylobacter jejuni subsp. jejuni serotype O:23/36 (strain 81-176) protein is Ribosome-recycling factor.